Reading from the N-terminus, the 163-residue chain is ATP synthase subunit b 1 (163 aa).

The chain crosses the membrane as a helical span at residues 5–25 (LDATFFAFVGLVLFLALVVYL).

Belongs to the ATPase B chain family. In terms of assembly, F-type ATPases have 2 components, F(1) - the catalytic core - and F(0) - the membrane proton channel. F(1) has five subunits: alpha(3), beta(3), gamma(1), delta(1), epsilon(1). F(0) has three main subunits: a(1), b(2) and c(10-14). The alpha and beta chains form an alternating ring which encloses part of the gamma chain. F(1) is attached to F(0) by a central stalk formed by the gamma and epsilon chains, while a peripheral stalk is formed by the delta and b chains.

It localises to the cell inner membrane. In terms of biological role, f(1)F(0) ATP synthase produces ATP from ADP in the presence of a proton or sodium gradient. F-type ATPases consist of two structural domains, F(1) containing the extramembraneous catalytic core and F(0) containing the membrane proton channel, linked together by a central stalk and a peripheral stalk. During catalysis, ATP synthesis in the catalytic domain of F(1) is coupled via a rotary mechanism of the central stalk subunits to proton translocation. Component of the F(0) channel, it forms part of the peripheral stalk, linking F(1) to F(0). This chain is ATP synthase subunit b 1, found in Rhizobium etli (strain CIAT 652).